Reading from the N-terminus, the 185-residue chain is Ribosome-recycling factor (185 aa).

The protein belongs to the RRF family.

Its subcellular location is the cytoplasm. Its function is as follows. Responsible for the release of ribosomes from messenger RNA at the termination of protein biosynthesis. May increase the efficiency of translation by recycling ribosomes from one round of translation to another. This chain is Ribosome-recycling factor, found in Enterobacter sp. (strain 638).